We begin with the raw amino-acid sequence, 269 residues long: Small ribosomal subunit protein uS2 (269 aa).

The protein belongs to the universal ribosomal protein uS2 family.

The protein is Small ribosomal subunit protein uS2 (rpsB) of Synechocystis sp. (strain ATCC 27184 / PCC 6803 / Kazusa).